Reading from the N-terminus, the 168-residue chain is Photosystem I assembly protein Ycf3 (168 aa).

TPR repeat units lie at residues 35-68 (AFTYYRDGMSAQSEGNYAEALQNYYEAMRLEMDP), 72-105 (SYILYNIGLIHTSNGEHTKALEYYFRALERNPFL), and 120-153 (GEQAIRQGDSEIAEAWFDQAAEYWKQAIALTPGN).

It belongs to the Ycf3 family.

The protein localises to the plastid. The protein resides in the chloroplast thylakoid membrane. Essential for the assembly of the photosystem I (PSI) complex. May act as a chaperone-like factor to guide the assembly of the PSI subunits. The protein is Photosystem I assembly protein Ycf3 of Pelargonium hortorum (Common geranium).